A 662-amino-acid chain; its full sequence is Leucine aminopeptidase 2 (662 aa).

A peptide contacts are provided by residues 178–180 (QLE) and 304–309 (PYGGME). Histidine 333 is a binding site for Zn(2+). Glutamate 334 (proton acceptor) is an active-site residue. Zn(2+) contacts are provided by histidine 337 and glutamate 356. Tyrosine 422 acts as the Proton donor in catalysis.

Belongs to the peptidase M1 family. The cofactor is Zn(2+).

Its subcellular location is the cytoplasm. It localises to the nucleus. The enzyme catalyses an epoxide + H2O = an ethanediol. Functionally, aminopeptidase that preferentially cleaves di- and tripeptides. Also has low epoxide hydrolase activity (in vitro). Can hydrolyze the epoxide leukotriene LTA(4) but it forms preferentially 5,6-dihydroxy-7,9,11,14-eicosatetraenoic acid rather than the cytokine leukotriene B(4) as the product compared to the homologous mammalian enzyme (in vitro). In Kluyveromyces lactis (strain ATCC 8585 / CBS 2359 / DSM 70799 / NBRC 1267 / NRRL Y-1140 / WM37) (Yeast), this protein is Leucine aminopeptidase 2.